A 75-amino-acid chain; its full sequence is Conotoxin Leo-O3 (75 aa).

The N-terminal stretch at 1–22 (MKLTCVVIVAVLFLTACQLATA) is a signal peptide. The propeptide occupies 23 to 42 (DISGGMRKHRALRSTTKLSR). 3 disulfide bridges follow: Cys-47-Cys-60, Cys-54-Cys-63, and Cys-59-Cys-69. Cys-69 carries the post-translational modification Cysteine amide. A propeptide spanning residues 70–75 (GSGLHV) is cleaved from the precursor.

Belongs to the conotoxin O1 superfamily. Expressed by the venom duct.

The protein localises to the secreted. In Conus leopardus (Leopard cone), this protein is Conotoxin Leo-O3.